The chain runs to 248 residues: Small ribosomal subunit protein uS3 (248 aa).

In terms of domain architecture, KH type-2 spans 39–111; it reads IRKYLNKVYK…EIVFNVVEVK (73 aa). A disordered region spans residues 222–248; it reads KPFEASAPRPQRRNRKEANNYVNAKKN.

This sequence belongs to the universal ribosomal protein uS3 family. In terms of assembly, part of the 30S ribosomal subunit. Forms a tight complex with proteins S10 and S14.

Its function is as follows. Binds the lower part of the 30S subunit head. Binds mRNA in the 70S ribosome, positioning it for translation. This is Small ribosomal subunit protein uS3 from Alteracholeplasma palmae (strain ATCC 49389 / J233) (Acholeplasma palmae).